The sequence spans 283 residues: MQLIIVSGRSGSGKTIALRVLEDLGFYCVDNLPISLLPTLVHAVIEQYQKIAISIDVRNLPEHSEELLDSLSFLPKGVEPEILFIDSDDNTLLKRFGETRRLHPLSQKELPLLEALQAEHKMLEPIMERATWRLDSSDLSLHQLSEQVTERVLGRADKKLIIVFQSFGFKYGLPKDADFVFDARILPNPHWQPELKLLTGLDTDVQIFFRQEPLVTKFIYQLENFLDTWLPHFQRSNRSYLTIATGCTGGQHRSVYISQQLAERFEQKAVKVQVRHRELKTHG.

ATP is bound at residue 8–15 (GRSGSGKT). 56–59 (DVRN) contributes to the GTP binding site.

It belongs to the RapZ-like family.

Functionally, displays ATPase and GTPase activities. The chain is Nucleotide-binding protein IL0393 from Idiomarina loihiensis (strain ATCC BAA-735 / DSM 15497 / L2-TR).